The sequence spans 342 residues: Foldase protein PrsA (342 aa).

The signal sequence occupies residues 1–22 (MVSVKKIVASALVGVLMFSAVG). Cysteine 23 is lipidated: N-palmitoyl cysteine. Cysteine 23 carries S-diacylglycerol cysteine lipidation. Residues 189 to 284 (DSGVLTKHLL…FGYHIIQAGA (96 aa)) enclose the PpiC domain.

The protein belongs to the PrsA family.

It localises to the cell membrane. The enzyme catalyses [protein]-peptidylproline (omega=180) = [protein]-peptidylproline (omega=0). Plays a major role in protein secretion by helping the post-translocational extracellular folding of several secreted proteins. The chain is Foldase protein PrsA from Clostridium perfringens (strain ATCC 13124 / DSM 756 / JCM 1290 / NCIMB 6125 / NCTC 8237 / Type A).